A 215-amino-acid polypeptide reads, in one-letter code: Phosphatidylserine decarboxylase proenzyme (215 aa).

The active-site Schiff-base intermediate with substrate; via pyruvic acid is the Ser184. Position 184 is a pyruvic acid (Ser); by autocatalysis (Ser184).

It belongs to the phosphatidylserine decarboxylase family. PSD-A subfamily. As to quaternary structure, heterodimer of a large membrane-associated beta subunit and a small pyruvoyl-containing alpha subunit. Pyruvate is required as a cofactor. Is synthesized initially as an inactive proenzyme. Formation of the active enzyme involves a self-maturation process in which the active site pyruvoyl group is generated from an internal serine residue via an autocatalytic post-translational modification. Two non-identical subunits are generated from the proenzyme in this reaction, and the pyruvate is formed at the N-terminus of the alpha chain, which is derived from the carboxyl end of the proenzyme. The post-translation cleavage follows an unusual pathway, termed non-hydrolytic serinolysis, in which the side chain hydroxyl group of the serine supplies its oxygen atom to form the C-terminus of the beta chain, while the remainder of the serine residue undergoes an oxidative deamination to produce ammonia and the pyruvoyl prosthetic group on the alpha chain.

The protein localises to the cell membrane. The catalysed reaction is a 1,2-diacyl-sn-glycero-3-phospho-L-serine + H(+) = a 1,2-diacyl-sn-glycero-3-phosphoethanolamine + CO2. Its pathway is phospholipid metabolism; phosphatidylethanolamine biosynthesis; phosphatidylethanolamine from CDP-diacylglycerol: step 2/2. Catalyzes the formation of phosphatidylethanolamine (PtdEtn) from phosphatidylserine (PtdSer). The chain is Phosphatidylserine decarboxylase proenzyme from Aromatoleum aromaticum (strain DSM 19018 / LMG 30748 / EbN1) (Azoarcus sp. (strain EbN1)).